The following is a 427-amino-acid chain: Peptidase B (427 aa).

The Mn(2+) site is built by lysine 195 and aspartate 200. Lysine 207 is a catalytic residue. Mn(2+) is bound by residues aspartate 218, aspartate 277, and glutamate 279. Arginine 281 is an active-site residue.

Belongs to the peptidase M17 family. In terms of assembly, homohexamer. It depends on Mn(2+) as a cofactor.

Its subcellular location is the cytoplasm. The catalysed reaction is Release of an N-terminal amino acid, Xaa, from a peptide or arylamide. Xaa is preferably Glu or Asp but may be other amino acids, including Leu, Met, His, Cys and Gln.. Functionally, probably plays an important role in intracellular peptide degradation. The chain is Peptidase B from Escherichia coli (strain SE11).